Consider the following 830-residue polypeptide: Periplasmic nitrate reductase (830 aa).

The segment at residues 1 to 32 is a signal peptide (tat-type signal); the sequence is MELNRRDFMKANAAVAAAAAAGITIPVKNVHA. The 57-residue stretch at 39–95 folds into the 4Fe-4S Mo/W bis-MGD-type domain; it reads IRWDKAPCRYCGTGCSVLVGTKDGRVVATQGDPDAEVNRGLNCIKGYFLSKIMYGAD. The [4Fe-4S] cluster site is built by C46, C49, C53, and C81. Residues K83, Q151, N176, C180, 213–220, 244–248, M374, Q378, N484, 510–511, K533, D560, and 720–729 contribute to the Mo-bis(molybdopterin guanine dinucleotide) site; these read WGSNMAEM, STFEH, SD, and TGRVLEHWHT. F796 provides a ligand contact to substrate. Residues N804 and K821 each coordinate Mo-bis(molybdopterin guanine dinucleotide).

The protein belongs to the prokaryotic molybdopterin-containing oxidoreductase family. NasA/NapA/NarB subfamily. Component of the periplasmic nitrate reductase NapAB complex composed of NapA and NapB. [4Fe-4S] cluster serves as cofactor. It depends on Mo-bis(molybdopterin guanine dinucleotide) as a cofactor. Predicted to be exported by the Tat system. The position of the signal peptide cleavage has not been experimentally proven.

It is found in the periplasm. It catalyses the reaction 2 Fe(II)-[cytochrome] + nitrate + 2 H(+) = 2 Fe(III)-[cytochrome] + nitrite + H2O. In terms of biological role, catalytic subunit of the periplasmic nitrate reductase complex NapAB. Receives electrons from NapB and catalyzes the reduction of nitrate to nitrite. The sequence is that of Periplasmic nitrate reductase from Mannheimia succiniciproducens (strain KCTC 0769BP / MBEL55E).